We begin with the raw amino-acid sequence, 27 residues long: Cupiennin-3b (27 aa).

Glutamate 27 carries the post-translational modification Glutamic acid 1-amide.

As to expression, expressed by the venom gland.

It localises to the secreted. The sequence is that of Cupiennin-3b from Cupiennius salei (American wandering spider).